The sequence spans 133 residues: Agouti-signaling protein (133 aa).

Residues 1–22 (MDVSRLLLATLLVCLCFLTAYS) form the signal peptide. N-linked (GlcNAc...) asparagine glycosylation occurs at Asn39. The disordered stretch occupies residues 56 to 95 (NKKSKKISRNEAEKKKRPSKRKAPMKNVARTRPPPPTPCV). The span at 70–79 (KKRPSKRKAP) shows a compositional bias: basic residues. 5 cysteine pairs are disulfide-bonded: Cys94-Cys109, Cys101-Cys115, Cys108-Cys126, Cys112-Cys133, and Cys117-Cys124. Positions 94–133 (CVATRDSCKPPAPACCDPCAFCQCRFFRSACSCRVLNPTC) constitute an Agouti domain.

The protein resides in the secreted. Functionally, involved in the regulation of melanogenesis. The binding of ASP to MC1R precludes alpha-MSH initiated signaling and thus blocks production of cAMP, leading to a down-regulation of eumelanogenesis (brown/black pigment) and thus increasing synthesis of pheomelanin (yellow/red pigment). The protein is Agouti-signaling protein (ASIP) of Bos taurus (Bovine).